The following is a 472-amino-acid chain: 6-phosphogluconate dehydrogenase, decarboxylating (472 aa).

Residues 10 to 15 (GMAVMG), 33 to 35 (NRT), 74 to 76 (VQA), and asparagine 102 contribute to the NADP(+) site. Substrate contacts are provided by residues asparagine 102 and 128–130 (SGG). The active-site Proton acceptor is lysine 184. 187 to 188 (HN) is a binding site for substrate. The active-site Proton donor is glutamate 191. Positions 192, 262, 289, 447, and 453 each coordinate substrate.

Belongs to the 6-phosphogluconate dehydrogenase family. In terms of assembly, homodimer.

It catalyses the reaction 6-phospho-D-gluconate + NADP(+) = D-ribulose 5-phosphate + CO2 + NADPH. Its pathway is carbohydrate degradation; pentose phosphate pathway; D-ribulose 5-phosphate from D-glucose 6-phosphate (oxidative stage): step 3/3. Its function is as follows. Catalyzes the oxidative decarboxylation of 6-phosphogluconate to ribulose 5-phosphate and CO(2), with concomitant reduction of NADP to NADPH. In Lactococcus lactis subsp. cremoris (strain MG1363), this protein is 6-phosphogluconate dehydrogenase, decarboxylating (gnd).